A 235-amino-acid chain; its full sequence is Cytidylate kinase (235 aa).

16-24 (GPAASGKST) contributes to the ATP binding site.

The protein belongs to the cytidylate kinase family. Type 1 subfamily.

The protein resides in the cytoplasm. It carries out the reaction CMP + ATP = CDP + ADP. The enzyme catalyses dCMP + ATP = dCDP + ADP. This Chlorobaculum tepidum (strain ATCC 49652 / DSM 12025 / NBRC 103806 / TLS) (Chlorobium tepidum) protein is Cytidylate kinase.